The sequence spans 141 residues: uncharacterized protein (141 aa).

The helical transmembrane segment at 13–35 (PVIGVILMVAITVILAAVIASFV) threads the bilayer.

It localises to the membrane. This is an uncharacterized protein from Archaeoglobus fulgidus (strain ATCC 49558 / DSM 4304 / JCM 9628 / NBRC 100126 / VC-16).